The sequence spans 598 residues: Serine/threonine-protein kinase cot-1 (598 aa).

Composition is skewed to polar residues over residues 1–16, 24–33, and 99–126; these read MDNTNRPHLNLGTNDT, TYPTTPSTFP, and PRTSGNSGQQQTYGNYLSAPMPSNTQTE. Disordered regions lie at residues 1-46, 80-148, and 163-190; these read MDNT…GGSQ, GSAG…NQKK, and RARERNQRQSEMEQKLGETNDARRRESI. A Protein kinase domain is found at 214–518; the sequence is YQTIKIIGKG…AHEIKSHAFF (305 aa). Residues 220–228 and Lys-243 contribute to the ATP site; that span reads IGKGAFGEV. Asp-337 acts as the Proton acceptor in catalysis. Positions 519-598 constitute an AGC-kinase C-terminal domain; that stretch reads RGVEFDSLRR…TFKRFDNNFR (80 aa).

Belongs to the protein kinase superfamily. STE Ser/Thr protein kinase family. COT1 subfamily.

It carries out the reaction L-seryl-[protein] + ATP = O-phospho-L-seryl-[protein] + ADP + H(+). It catalyses the reaction L-threonyl-[protein] + ATP = O-phospho-L-threonyl-[protein] + ADP + H(+). Its function is as follows. Protein kinase required for hyphal elongation. The protein is Serine/threonine-protein kinase cot-1 (cot-1) of Neurospora crassa (strain ATCC 24698 / 74-OR23-1A / CBS 708.71 / DSM 1257 / FGSC 987).